The chain runs to 293 residues: Cytidine deaminase (293 aa).

CMP/dCMP-type deaminase domains follow at residues 47–166 (DDRA…FGPA) and 186–293 (VSDD…YQAV). Substrate is bound at residue 88–90 (NME). His101 is a Zn(2+) binding site. Residue Glu103 is the Proton donor of the active site. Zn(2+) is bound by residues Cys128 and Cys131.

Belongs to the cytidine and deoxycytidylate deaminase family. As to quaternary structure, homodimer. Zn(2+) is required as a cofactor.

The enzyme catalyses cytidine + H2O + H(+) = uridine + NH4(+). It catalyses the reaction 2'-deoxycytidine + H2O + H(+) = 2'-deoxyuridine + NH4(+). In terms of biological role, this enzyme scavenges exogenous and endogenous cytidine and 2'-deoxycytidine for UMP synthesis. The sequence is that of Cytidine deaminase from Aeromonas hydrophila subsp. hydrophila (strain ATCC 7966 / DSM 30187 / BCRC 13018 / CCUG 14551 / JCM 1027 / KCTC 2358 / NCIMB 9240 / NCTC 8049).